The chain runs to 234 residues: 3,4-dihydroxy-2-butanone 4-phosphate synthase (234 aa).

D-ribulose 5-phosphate contacts are provided by residues 39 to 40, Asp-44, 152 to 156, and Glu-176; these read RE and RRGHT. A Mg(2+)-binding site is contributed by Glu-40. His-155 is a binding site for Mg(2+).

The protein belongs to the DHBP synthase family. Homodimer. Mg(2+) serves as cofactor. The cofactor is Mn(2+).

It catalyses the reaction D-ribulose 5-phosphate = (2S)-2-hydroxy-3-oxobutyl phosphate + formate + H(+). It participates in cofactor biosynthesis; riboflavin biosynthesis; 2-hydroxy-3-oxobutyl phosphate from D-ribulose 5-phosphate: step 1/1. In terms of biological role, catalyzes the conversion of D-ribulose 5-phosphate to formate and 3,4-dihydroxy-2-butanone 4-phosphate. The chain is 3,4-dihydroxy-2-butanone 4-phosphate synthase from Pelobacter propionicus (strain DSM 2379 / NBRC 103807 / OttBd1).